The following is a 505-amino-acid chain: 4-trimethylaminobutyraldehyde dehydrogenase (505 aa).

Residues lysine 191 and 243–247 each bind NAD(+); that span reads GSVPT. Glutamate 265 acts as the Proton acceptor in catalysis. Cysteine 299 functions as the Nucleophile in the catalytic mechanism. Glutamate 402 provides a ligand contact to NAD(+).

The protein belongs to the aldehyde dehydrogenase family. As to quaternary structure, homotetramer. In terms of tissue distribution, constitutively expressed in all organs tested: brain, eye, gill, GI, heart, liver, kidney, muscle, skin, testis and ovary.

The protein resides in the cytoplasm. Its subcellular location is the cytosol. It catalyses the reaction 4-(trimethylamino)butanal + NAD(+) + H2O = 4-(trimethylamino)butanoate + NADH + 2 H(+). The catalysed reaction is an aldehyde + NAD(+) + H2O = a carboxylate + NADH + 2 H(+). It participates in amine and polyamine biosynthesis; carnitine biosynthesis. Its function is as follows. Converts gamma-trimethylaminobutyraldehyde into gamma-butyrobetaine with high efficiency (in vitro). Can catalyze the irreversible oxidation of a broad range of aldehydes to the corresponding acids in an NAD-dependent reaction, but with low efficiency. The protein is 4-trimethylaminobutyraldehyde dehydrogenase (aldh9A1) of Oryzias latipes (Japanese rice fish).